The chain runs to 517 residues: Phospholipase C C (517 aa).

A signal peptide (tat-type signal) is located at residues 1-39; that stretch reads MVSQGAFAGMSRRAFLAKAAGAGAAAVLTDWAAPVIEKA.

It belongs to the bacterial phospholipase C family. Predicted to be exported by the Tat system. The position of the signal peptide cleavage has not been experimentally proven.

It localises to the secreted. Its subcellular location is the cell wall. The enzyme catalyses a 1,2-diacyl-sn-glycero-3-phosphocholine + H2O = phosphocholine + a 1,2-diacyl-sn-glycerol + H(+). It carries out the reaction 1,2-dihexadecanoyl-sn-glycero-3-phosphocholine + H2O = 1,2-dihexadecanoyl-sn-glycerol + phosphocholine + H(+). In terms of biological role, involved in virulence. Induces cytotoxic effects on mouse macrophage cell lines, via direct or indirect enzymatic hydrolysis of cell membrane phospholipids. Hydrolyzes phosphatidylcholine. Does not have hemolytic activity. This is Phospholipase C C from Mycobacterium tuberculosis (strain ATCC 25618 / H37Rv).